We begin with the raw amino-acid sequence, 252 residues long: tRNA pseudouridine synthase A (252 aa).

D51 acts as the Nucleophile in catalysis. A substrate-binding site is contributed by Y105.

This sequence belongs to the tRNA pseudouridine synthase TruA family.

The catalysed reaction is uridine(38/39/40) in tRNA = pseudouridine(38/39/40) in tRNA. Functionally, formation of pseudouridine at positions 38, 39 and 40 in the anticodon stem and loop of transfer RNAs. This Thermoplasma acidophilum (strain ATCC 25905 / DSM 1728 / JCM 9062 / NBRC 15155 / AMRC-C165) protein is tRNA pseudouridine synthase A.